Reading from the N-terminus, the 340-residue chain is Uroporphyrinogen decarboxylase (340 aa).

Substrate-binding positions include 21–25, Phe40, Asp71, Tyr147, Ser202, and His316; that span reads RQAGR.

Belongs to the uroporphyrinogen decarboxylase family. As to quaternary structure, homodimer.

It is found in the cytoplasm. It catalyses the reaction uroporphyrinogen III + 4 H(+) = coproporphyrinogen III + 4 CO2. It participates in porphyrin-containing compound metabolism; protoporphyrin-IX biosynthesis; coproporphyrinogen-III from 5-aminolevulinate: step 4/4. Functionally, catalyzes the decarboxylation of four acetate groups of uroporphyrinogen-III to yield coproporphyrinogen-III. The polypeptide is Uroporphyrinogen decarboxylase (Wolinella succinogenes (strain ATCC 29543 / DSM 1740 / CCUG 13145 / JCM 31913 / LMG 7466 / NCTC 11488 / FDC 602W) (Vibrio succinogenes)).